The primary structure comprises 237 residues: LexA repressor (237 aa).

Residues 26 to 46 (FDEMKDALDLRSKSGIHRLIT) constitute a DNA-binding region (H-T-H motif). Catalysis depends on for autocatalytic cleavage activity residues Ser-158 and Lys-196.

Belongs to the peptidase S24 family. As to quaternary structure, homodimer.

It carries out the reaction Hydrolysis of Ala-|-Gly bond in repressor LexA.. Represses a number of genes involved in the response to DNA damage (SOS response), including recA and lexA. In the presence of single-stranded DNA, RecA interacts with LexA causing an autocatalytic cleavage which disrupts the DNA-binding part of LexA, leading to derepression of the SOS regulon and eventually DNA repair. The sequence is that of LexA repressor from Rhodopseudomonas palustris (strain BisB18).